Consider the following 553-residue polypeptide: CTP synthase (553 aa).

An amidoligase domain region spans residues 1 to 270 (MTKFVFVTGG…DRIICEELRI (270 aa)). A CTP-binding site is contributed by serine 13. Serine 13 provides a ligand contact to UTP. ATP contacts are provided by residues 14–19 (SLGKGI) and aspartate 71. 2 residues coordinate Mg(2+): aspartate 71 and glutamate 144. Residues 151-153 (DIE), 191-196 (KTKPTQ), and lysine 227 contribute to the CTP site. UTP is bound by residues 191–196 (KTKPTQ) and lysine 227. One can recognise a Glutamine amidotransferase type-1 domain in the interval 295–547 (TIGMVGKYVD…VEAALAHQQN (253 aa)). Residue glycine 356 coordinates L-glutamine. The Nucleophile; for glutamine hydrolysis role is filled by cysteine 383. Residues 384-387 (LGMQ), glutamate 407, and arginine 473 each bind L-glutamine. Catalysis depends on residues histidine 520 and glutamate 522.

It belongs to the CTP synthase family. As to quaternary structure, homotetramer.

It catalyses the reaction UTP + L-glutamine + ATP + H2O = CTP + L-glutamate + ADP + phosphate + 2 H(+). It carries out the reaction L-glutamine + H2O = L-glutamate + NH4(+). The catalysed reaction is UTP + NH4(+) + ATP = CTP + ADP + phosphate + 2 H(+). It functions in the pathway pyrimidine metabolism; CTP biosynthesis via de novo pathway; CTP from UDP: step 2/2. Its activity is regulated as follows. Allosterically activated by GTP, when glutamine is the substrate; GTP has no effect on the reaction when ammonia is the substrate. The allosteric effector GTP functions by stabilizing the protein conformation that binds the tetrahedral intermediate(s) formed during glutamine hydrolysis. Inhibited by the product CTP, via allosteric rather than competitive inhibition. Its function is as follows. Catalyzes the ATP-dependent amination of UTP to CTP with either L-glutamine or ammonia as the source of nitrogen. Regulates intracellular CTP levels through interactions with the four ribonucleotide triphosphates. In Ralstonia pickettii (strain 12J), this protein is CTP synthase.